The primary structure comprises 428 residues: MNHGVYQNLFIDSLDSVDPQIAEVLDLELRRQRDFLEMIASENFVPRAILQAQGSVLTNKYAEGYPQNRYYGGCECVDLAEDLAISRVRDLFGSEFANVQPHSGSTANAAALMALTEVGSTIMGLELDHGGHLTHGMPLSFSGKHYKAVTYRLDPKTCLIDMDSVRDLALRHRPSVIIAGWSAYVRHLDFEAFRSIADEVGARLWVDMAHFAGLVAAGLYPSPIPWADVVTSTTHKTLAGPRGGFILAKKEFGKAINTAVFPGQQGGPLMHVIAAKAVAFKVAASEGFRERQRITIEAARTVAKRIGEDYRLRDRGIDILTGGTDVHMVLVDMRKSDMDGLTGQNLLHEVGVTVNRNSMPYDKRPPRITSGIRIGTPALVTRGLSLDEFDEVADIISNALLTIDLPKQKQRALRIARTHPVYEGLRQY.

(6S)-5,6,7,8-tetrahydrofolate-binding positions include leucine 127 and 131–133; that span reads GHL. N6-(pyridoxal phosphate)lysine is present on lysine 236.

Belongs to the SHMT family. As to quaternary structure, homodimer. Requires pyridoxal 5'-phosphate as cofactor.

The protein localises to the cytoplasm. The enzyme catalyses (6R)-5,10-methylene-5,6,7,8-tetrahydrofolate + glycine + H2O = (6S)-5,6,7,8-tetrahydrofolate + L-serine. It participates in one-carbon metabolism; tetrahydrofolate interconversion. The protein operates within amino-acid biosynthesis; glycine biosynthesis; glycine from L-serine: step 1/1. In terms of biological role, catalyzes the reversible interconversion of serine and glycine with tetrahydrofolate (THF) serving as the one-carbon carrier. This reaction serves as the major source of one-carbon groups required for the biosynthesis of purines, thymidylate, methionine, and other important biomolecules. Also exhibits THF-independent aldolase activity toward beta-hydroxyamino acids, producing glycine and aldehydes, via a retro-aldol mechanism. The protein is Serine hydroxymethyltransferase of Tropheryma whipplei (strain TW08/27) (Whipple's bacillus).